A 428-amino-acid chain; its full sequence is Histidinol dehydrogenase (428 aa).

Residues Tyr-125, Gln-187, and Asn-210 each coordinate NAD(+). Positions 234, 256, and 259 each coordinate substrate. Zn(2+) is bound by residues Gln-256 and His-259. Catalysis depends on proton acceptor residues Glu-323 and His-324. Residues His-324, Asp-357, Glu-411, and His-416 each contribute to the substrate site. Asp-357 serves as a coordination point for Zn(2+). His-416 lines the Zn(2+) pocket.

The protein belongs to the histidinol dehydrogenase family. The cofactor is Zn(2+).

It catalyses the reaction L-histidinol + 2 NAD(+) + H2O = L-histidine + 2 NADH + 3 H(+). Its pathway is amino-acid biosynthesis; L-histidine biosynthesis; L-histidine from 5-phospho-alpha-D-ribose 1-diphosphate: step 9/9. Its function is as follows. Catalyzes the sequential NAD-dependent oxidations of L-histidinol to L-histidinaldehyde and then to L-histidine. This chain is Histidinol dehydrogenase, found in Bacteroides thetaiotaomicron (strain ATCC 29148 / DSM 2079 / JCM 5827 / CCUG 10774 / NCTC 10582 / VPI-5482 / E50).